The chain runs to 314 residues: Putative S-adenosyl-L-methionine-dependent methyltransferase MRA_3805 (314 aa).

Residues Asp-132 and 161-162 (DL) contribute to the S-adenosyl-L-methionine site.

The protein belongs to the UPF0677 family.

In terms of biological role, exhibits S-adenosyl-L-methionine-dependent methyltransferase activity. The chain is Putative S-adenosyl-L-methionine-dependent methyltransferase MRA_3805 from Mycobacterium tuberculosis (strain ATCC 25177 / H37Ra).